Here is a 368-residue protein sequence, read N- to C-terminus: Proline-rich protein 5-like (368 aa).

Phosphoserine is present on Ser28. A disordered region spans residues 327 to 368; it reads PSFPPPHRQCSSEPNITDNPDGLEEGARGSQEGSELNCASLS. Polar residues-rich tracts occupy residues 335–344 and 357–368; these read QCSSEPNITD and QEGSELNCASLS.

This sequence belongs to the PROTOR family. In terms of assembly, interacts with the mammalian target of rapamycin complex 2 (mTORC2) which contains MTOR, MLST8, PRR5, RICTOR, MAPKAP1 and DEPTOR. Interacts with RFFL. Interacts (via C-terminus) with ZFP36 (via C-terminus); this interaction may accelerate ZFP36-mediated mRNA decay during stress. Interacts with RICTOR. Post-translationally, ubiquitinated. Ubiquitination by RFFL promotes proteasomal degradation of PRR5L thereby modifying the substrate-specific activity of the mTORC2 complex. Ubiquitination by RFFL is stimulated by LPA/lysophosphatidic acid.

Its function is as follows. Associates with the mTORC2 complex that regulates cellular processes including survival and organization of the cytoskeleton. Regulates the activity of the mTORC2 complex in a substrate-specific manner preventing for instance the specific phosphorylation of PKCs and thereby controlling cell migration. Plays a role in the stimulation of ZFP36-mediated mRNA decay of several ZFP36-associated mRNAs, such as TNF-alpha and GM-CSF, in response to stress. Required for ZFP36 localization to cytoplasmic stress granule (SG) and P-body (PB) in response to stress. This is Proline-rich protein 5-like (PRR5L) from Homo sapiens (Human).